The primary structure comprises 208 residues: Protein-L-isoaspartate O-methyltransferase (208 aa).

The active site involves Ser-59.

Belongs to the methyltransferase superfamily. L-isoaspartyl/D-aspartyl protein methyltransferase family. In terms of assembly, monomer.

Its subcellular location is the cytoplasm. The catalysed reaction is [protein]-L-isoaspartate + S-adenosyl-L-methionine = [protein]-L-isoaspartate alpha-methyl ester + S-adenosyl-L-homocysteine. Its function is as follows. Catalyzes the methyl esterification of L-isoaspartyl residues in peptides and proteins that result from spontaneous decomposition of normal L-aspartyl and L-asparaginyl residues. It plays a role in the repair and/or degradation of damaged proteins. The sequence is that of Protein-L-isoaspartate O-methyltransferase (pcm) from Shigella flexneri.